Consider the following 129-residue polypeptide: MEHPSTNYTPEQQHEKLKHYVLIPKHLWSYIKYGTHVRYYTTQNVFRVGGFVLQNPYEAVIKNEVKMAIRLQNSFNTKAKGYVTWTVAYNDISKLYAKPDAIMLTIQENVEKALHALNQNVLTLASKIR.

This sequence belongs to the asfivirus C129R family.

It localises to the virion. Plays a role in the inhibition of type I interferon signaling pathway. Mechanistically, specifically interacts with 2',3'-cGAMP and cleaves it via its phosphodiesterase activity. In turn, prevents 2',3'-cGAMP interaction with host ER-resident STING1 leading to inhibition of downstream signaling pathway and type I interferon production. This is an uncharacterized protein from Ornithodoros (relapsing fever ticks).